The following is a 215-amino-acid chain: dITP/XTP pyrophosphatase (215 aa).

13 to 18 contributes to the substrate binding site; the sequence is THNIGK. Aspartate 74 functions as the Proton acceptor in the catalytic mechanism. A Mg(2+)-binding site is contributed by aspartate 74. Substrate contacts are provided by residues serine 75, 163-166, lysine 186, and 199-200; these read FGFD and HR.

This sequence belongs to the HAM1 NTPase family. Homodimer. Mg(2+) is required as a cofactor.

It carries out the reaction XTP + H2O = XMP + diphosphate + H(+). The catalysed reaction is dITP + H2O = dIMP + diphosphate + H(+). It catalyses the reaction ITP + H2O = IMP + diphosphate + H(+). Functionally, pyrophosphatase that catalyzes the hydrolysis of nucleoside triphosphates to their monophosphate derivatives, with a high preference for the non-canonical purine nucleotides XTP (xanthosine triphosphate), dITP (deoxyinosine triphosphate) and ITP. Seems to function as a house-cleaning enzyme that removes non-canonical purine nucleotides from the nucleotide pool, thus preventing their incorporation into DNA/RNA and avoiding chromosomal lesions. This chain is dITP/XTP pyrophosphatase, found in Bartonella henselae (strain ATCC 49882 / DSM 28221 / CCUG 30454 / Houston 1) (Rochalimaea henselae).